Consider the following 518-residue polypeptide: Putative beta-xylosidase (518 aa).

The active-site Proton acceptor is D47. The Proton donor role is filled by E203.

Belongs to the glycosyl hydrolase 43 family.

The enzyme catalyses Hydrolysis of (1-&gt;4)-beta-D-xylans, to remove successive D-xylose residues from the non-reducing termini.. The polypeptide is Putative beta-xylosidase (Xylanibacter ruminicola (Prevotella ruminicola)).